A 275-amino-acid chain; its full sequence is uncharacterized protein (275 aa).

D45 lines the NADPH pocket. Active-site proton donor residues include Y50 and H111. Positions 139, 162, 191, 196, 232, 233, and 237 each coordinate NADPH.

This sequence belongs to the aldo/keto reductase family.

It localises to the cytoplasm. It is found in the nucleus. This is an uncharacterized protein from Schizosaccharomyces pombe (strain 972 / ATCC 24843) (Fission yeast).